A 606-amino-acid polypeptide reads, in one-letter code: MPYEIKKVFASLPQVERGVSKILGGDPKGDHFLYTNGKCVILRNIDNPAIADIYTEHAHQVVVAKYAPSGFYIASGDISGKLRIWDTTQKEHLLKYEYQPFAGKIKDIAWTEDSKRIAVVGEGREKFGAVFLWDTGSSVGEITGHNKVINSVDIKQTRPYRLATGSDDNCAAFFEGPPFKFKFTIGDHSRFVNCVRFSPDGNRFATASADGQIFIYDGKTGEKVCALGESKAHDGGIYAISWSPDSTHLLSASGDKTSKIWDVNVNSVVSTFPMGSNVLDQQLGCLWQKDHLLSISLSGYINYLDKNNPSKPLRVIKGHSKSIQCLTVHRNGGKSYIYSGSHDGHINYWDSETGENDSFSGKGHTNQVSRMTVNESEQLVSCSMDDTVRYTNLTLRDYSGQGVVKLDVQPKCVAVGPGGYTVVVCIGQIVLLKDQKKCFSIDNPGYEPEVVAVHPGGDTVAVGGTDGNVRVYSILASTLKDEGKLLEAKGPVTDVAYSHDGAFLAVCDASKVVTVFSVADGYSENNVFYGHHAKIVCLAWSPDNEHFASGGMDMMVYVWTLSDPETKVKIQDAHRLHHVSSLAWLDEHTLVTTSHDASVKEWTITY.

WD repeat units follow at residues 4-45, 48-87, 93-135, 138-176, 180-218, 224-263, 270-306, 311-351, 358-408, 432-474, 480-518, 523-561, and 566-604; these read EIKK…LRNI, PAIADIYTEHAHQVVVAKYAPSGFYIASGDISGKLRIWDT, LLKY…LWDT, SVGEITGHNKVINSVDIKQTRPYRLATGSDDNCAAFFEG, KFKFTIGDHSRFVNCVRFSPDGNRFATASADGQIFIYDG, VCALGESKAHDGGIYAISWSPDSTHLLSASGDKTSKIWDV, STFPMGSNVLDQQLGCLWQKDHLLSISLSGYINYLDK, KPLR…YWDS, SFSG…KLDV, LKDQ…VYSI, KDEGKLLEAKGPVTDVAYSHDGAFLAVCDASKVVTVFSV, SENNVFYGHHAKIVCLAWSPDNEHFASGGMDMMVYVWTL, and TKVKIQDAHRLHHVSSLAWLDEHTLVTTSHDASVKEWTI. Lysine 28, lysine 81, lysine 95, and lysine 115 each carry N6-acetyllysine. Phosphotyrosine is present on tyrosine 238. Lysine 480 carries the post-translational modification N6-acetyllysine.

The protein belongs to the WD repeat AIP1 family.

Its subcellular location is the cytoplasm. It localises to the cytoskeleton. It is found in the cell projection. The protein localises to the podosome. Its function is as follows. Induces disassembly of actin filaments in conjunction with ADF/cofilin family proteins. Enhances cofilin-mediated actin severing. Involved in cytokinesis. Involved in chemotactic cell migration by restricting lamellipodial membrane protrusions. Involved in myocardium sarcomere organization. Required for cardiomyocyte growth at the postnatal and maintenance at the adult stage. Involved in neutrophil actin dynamics and migration. Involved in megakaryocyte maturation and platelet shedding. Required for the establishment of planar cell polarity (PCP) during follicular epithelium development and for cell shape changes during PCP; the function seems to implicate cooperation with CFL1 and/or DSTN/ADF. Involved in the generation/maintenance of cortical tension. Involved in assembly and maintenance of epithelial apical cell junctions and plays a role in the organization of the perijunctional actomyosin belt. This is WD repeat-containing protein 1 (Wdr1) from Mus musculus (Mouse).